Reading from the N-terminus, the 299-residue chain is GTPase Era (299 aa).

Positions 5-175 constitute an Era-type G domain; sequence RSGFVCLVGR…IDVLAAALPP (171 aa). Residues 13-20 form a G1 region; the sequence is GRPNTGKS. 13-20 contributes to the GTP binding site; sequence GRPNTGKS. A G2 region spans residues 39 to 43; the sequence is QTTRH. Residues 60–63 form a G3 region; it reads DTPG. GTP-binding positions include 60–64 and 124–127; these read DTPGL and TKID. The G4 stretch occupies residues 124-127; the sequence is TKID. The tract at residues 154-156 is G5; that stretch reads VSA. Residues 206–285 enclose the KH type-2 domain; that stretch reads VRDELPHSLA…YLDLRVKVAK (80 aa).

Belongs to the TRAFAC class TrmE-Era-EngA-EngB-Septin-like GTPase superfamily. Era GTPase family. In terms of assembly, monomer.

The protein localises to the cell envelope. Its subcellular location is the secreted. The protein resides in the cell wall. Its function is as follows. Exhibits GTPase activity. Binds RNA but is probably not involved in ribosome assembly in mycobacteria. This is GTPase Era from Mycolicibacterium paratuberculosis (strain ATCC BAA-968 / K-10) (Mycobacterium paratuberculosis).